A 122-amino-acid chain; its full sequence is Large ribosomal subunit protein uL14 (122 aa).

This sequence belongs to the universal ribosomal protein uL14 family. Part of the 50S ribosomal subunit. Forms a cluster with proteins L3 and L19. In the 70S ribosome, L14 and L19 interact and together make contacts with the 16S rRNA in bridges B5 and B8.

Its function is as follows. Binds to 23S rRNA. Forms part of two intersubunit bridges in the 70S ribosome. In Mycobacterium sp. (strain KMS), this protein is Large ribosomal subunit protein uL14.